The primary structure comprises 202 residues: Inosine triphosphate pyrophosphatase (202 aa).

ITP is bound at residue 8 to 13 (TGNANK). Glutamate 55 provides a ligand contact to Mg(2+). ITP is bound by residues lysine 67, 83 to 84 (DT), lysine 100, 159 to 162 (FGWD), lysine 182, and 187 to 188 (HR).

It belongs to the HAM1 NTPase family. As to quaternary structure, homodimer. Requires Mg(2+) as cofactor. Mn(2+) serves as cofactor.

The protein resides in the cytoplasm. It localises to the nucleus. It carries out the reaction ITP + H2O = IMP + diphosphate + H(+). It catalyses the reaction dITP + H2O = dIMP + diphosphate + H(+). The catalysed reaction is XTP + H2O = XMP + diphosphate + H(+). Its function is as follows. Pyrophosphatase that hydrolyzes non-canonical purine nucleotides such as inosine triphosphate (ITP), deoxyinosine triphosphate (dITP) or xanthosine 5'-triphosphate (XTP) to their respective monophosphate derivatives. The enzyme does not distinguish between the deoxy- and ribose forms. Probably excludes non-canonical purines from RNA and DNA precursor pools, thus preventing their incorporation into RNA and DNA and avoiding chromosomal lesions. This chain is Inosine triphosphate pyrophosphatase, found in Candida albicans (strain SC5314 / ATCC MYA-2876) (Yeast).